The primary structure comprises 538 residues: Phosphoenolpyruvate carboxykinase (ATP) (538 aa).

The substrate site is built by R64, Y205, and K211. ATP contacts are provided by residues K211, H230, and 246 to 254 (GLSGTGKTT). Residues K211 and H230 each contribute to the Mn(2+) site. Mn(2+) is bound at residue D267. Residues E295, R331, 447–448 (RI), and T453 each bind ATP. A substrate-binding site is contributed by R331.

The protein belongs to the phosphoenolpyruvate carboxykinase (ATP) family. In terms of assembly, monomer. It depends on Mn(2+) as a cofactor.

It is found in the cytoplasm. The catalysed reaction is oxaloacetate + ATP = phosphoenolpyruvate + ADP + CO2. It participates in carbohydrate biosynthesis; gluconeogenesis. Its function is as follows. Involved in the gluconeogenesis. Catalyzes the conversion of oxaloacetate (OAA) to phosphoenolpyruvate (PEP) through direct phosphoryl transfer between the nucleoside triphosphate and OAA. This is Phosphoenolpyruvate carboxykinase (ATP) from Histophilus somni (strain 129Pt) (Haemophilus somnus).